Here is a 521-residue protein sequence, read N- to C-terminus: Bifunctional dihydrofolate reductase-thymidylate synthase (521 aa).

A DHFR domain is found at 17-194 (NYQVVVAGTR…IRHSFVSFVR (178 aa)). A substrate-binding site is contributed by Val-21. NADP(+) contacts are provided by residues Ala-23 and 29–35 (GIGKDGV). A substrate-binding site is contributed by Asp-43. Residues 67–69 (RKT) and 88–91 (LTRS) contribute to the NADP(+) site. Ile-130 serves as a coordination point for substrate. NADP(+) is bound at residue 131 to 138 (GGGQVLRE). Thr-151 is a substrate binding site. Residues 197-521 (KSVAETHESN…HQKIEMKMAV (325 aa)) form a thymidylate synthase region. Arg-258 provides a ligand contact to dUMP. The active site involves Cys-403. DUMP is bound by residues His-404, 422–426 (QRSAD), Asn-434, and 464–466 (HVY).

In the N-terminal section; belongs to the dihydrofolate reductase family. This sequence in the C-terminal section; belongs to the thymidylate synthase family.

It carries out the reaction (6S)-5,6,7,8-tetrahydrofolate + NADP(+) = 7,8-dihydrofolate + NADPH + H(+). The catalysed reaction is dUMP + (6R)-5,10-methylene-5,6,7,8-tetrahydrofolate = 7,8-dihydrofolate + dTMP. It participates in cofactor biosynthesis; tetrahydrofolate biosynthesis; 5,6,7,8-tetrahydrofolate from 7,8-dihydrofolate: step 1/1. Functionally, bifunctional enzyme. Involved in de novo dTMP biosynthesis. Key enzyme in folate metabolism. Can play two different roles depending on the source of dihydrofolate: de novo synthesis of tetrahydrofolate or recycling of the dihydrofolate released as one of the end products of the TS catalyzed reaction. Catalyzes an essential reaction for de novo glycine and purine synthesis, DNA precursor synthesis, and for the conversion of dUMP to dTMP. In Zea mays (Maize), this protein is Bifunctional dihydrofolate reductase-thymidylate synthase (DRTS).